A 482-amino-acid chain; its full sequence is tRNA sulfurtransferase (482 aa).

Positions 61 to 165 (LAIRDALTRI…DDRLLLIKGR (105 aa)) constitute a THUMP domain. ATP is bound by residues 183–184 (LI), Lys-265, Gly-287, and Gln-296. An intrachain disulfide couples Cys-344 to Cys-456. A Rhodanese domain is found at 404–482 (FGANDVILDI…GFANVKVYRP (79 aa)). Catalysis depends on Cys-456, which acts as the Cysteine persulfide intermediate.

The protein belongs to the ThiI family.

The protein localises to the cytoplasm. The enzyme catalyses [ThiI sulfur-carrier protein]-S-sulfanyl-L-cysteine + a uridine in tRNA + 2 reduced [2Fe-2S]-[ferredoxin] + ATP + H(+) = [ThiI sulfur-carrier protein]-L-cysteine + a 4-thiouridine in tRNA + 2 oxidized [2Fe-2S]-[ferredoxin] + AMP + diphosphate. It carries out the reaction [ThiS sulfur-carrier protein]-C-terminal Gly-Gly-AMP + S-sulfanyl-L-cysteinyl-[cysteine desulfurase] + AH2 = [ThiS sulfur-carrier protein]-C-terminal-Gly-aminoethanethioate + L-cysteinyl-[cysteine desulfurase] + A + AMP + 2 H(+). The protein operates within cofactor biosynthesis; thiamine diphosphate biosynthesis. In terms of biological role, catalyzes the ATP-dependent transfer of a sulfur to tRNA to produce 4-thiouridine in position 8 of tRNAs, which functions as a near-UV photosensor. Also catalyzes the transfer of sulfur to the sulfur carrier protein ThiS, forming ThiS-thiocarboxylate. This is a step in the synthesis of thiazole, in the thiamine biosynthesis pathway. The sulfur is donated as persulfide by IscS. This chain is tRNA sulfurtransferase, found in Salmonella agona (strain SL483).